The following is a 94-amino-acid chain: Co-chaperonin GroES (94 aa).

Belongs to the GroES chaperonin family. As to quaternary structure, heptamer of 7 subunits arranged in a ring. Interacts with the chaperonin GroEL.

The protein resides in the cytoplasm. Functionally, together with the chaperonin GroEL, plays an essential role in assisting protein folding. The GroEL-GroES system forms a nano-cage that allows encapsulation of the non-native substrate proteins and provides a physical environment optimized to promote and accelerate protein folding. GroES binds to the apical surface of the GroEL ring, thereby capping the opening of the GroEL channel. The chain is Co-chaperonin GroES from Halalkalibacterium halodurans (strain ATCC BAA-125 / DSM 18197 / FERM 7344 / JCM 9153 / C-125) (Bacillus halodurans).